The following is a 438-amino-acid chain: Shikimate transporter (438 aa).

12 helical membrane passes run 28-48, 64-84, 109-129, 133-153, 168-188, 193-213, 255-275, 287-307, 318-337, 341-363, 387-407, and 411-431; these read FAGAVVDWYDFLLYGITAALV, LAAFATFGVGFLFRPLGGVIF, ALIGILPSFSTIGWWAPILLV, AIQGFAVGGEWGGAALLSVES, VGYGVGLLLSTGLVSLISMMT, FLSWGWRIPFLFSIVLVLGAL, IIALRLCELLTMYIVTAFALN, LFLNIGLLVGGLSCLTIPCFA, VYITGTLIGTLSAFPFFMAL, SIFWIVFFSIMLANIAHDMVVCV, VASVVGGGFTPFIAAALITYF, and WHSVAIYLLAGCLISAMTALL.

The protein belongs to the major facilitator superfamily. Metabolite:H+ Symporter (MHS) family (TC 2.A.1.6) family.

Its subcellular location is the cell inner membrane. It carries out the reaction shikimate(in) + H(+)(in) = shikimate(out) + H(+)(out). Its function is as follows. Involved in the uptake of shikimate, an intermediate in the aromatic amino acid biosynthetic pathway. The chain is Shikimate transporter from Escherichia coli (strain K12).